The chain runs to 394 residues: D-mannose isomerase (394 aa).

Catalysis depends on proton donor/acceptor residues histidine 251 and histidine 380.

Belongs to the N-acylglucosamine 2-epimerase family. In terms of assembly, monomer.

The enzyme catalyses D-mannose = D-fructose. The catalysed reaction is D-lyxose = D-xylulose. Its function is as follows. Catalyzes the reversible isomerization of D-mannose to D-fructose. Can also isomerize D-lyxose, with lower efficiency. In longer reaction with a higher concentration of enzyme, it can isomerize 4-OH D-mannose derivatives (D-talose and 4-O-monosaccharyl-D-mannose). Cannot use D-glucose. This Marinomonas mediterranea (strain ATCC 700492 / JCM 21426 / NBRC 103028 / MMB-1) protein is D-mannose isomerase.